A 5085-amino-acid polypeptide reads, in one-letter code: Protein piccolo (5085 aa).

The span at 1-20 shows a compositional bias: low complexity; sequence MGNEASLEGEGLPEGLAAAA. Disordered regions lie at residues 1–142 and 173–516; these read MGNE…DFKE and DLIS…TPAQ. Residues 92–101 show a composition bias toward pro residues; that stretch reads PGKPPDPGRP. 3 stretches are compositionally biased toward basic and acidic residues: residues 110-121, 132-142, and 184-198; these read RTTDTFRSEQKL, KESKSRTDFKE, and ETTK…EQGK. Phosphoserine occurs at positions 211 and 231. Residues 227 to 240 show a composition bias toward polar residues; it reads QQDSSPKSVSSQQA. The span at 253-268 shows a compositional bias: low complexity; that stretch reads PSQQSPAQTPAQQASP. Polar residues-rich tracts occupy residues 275-285, 318-332, and 375-391; these read QPGSAKATVQQ, KTSS…SLAQ, and TPAQ…QQPG. A 12 X 10 AA tandem approximate repeats of P-A-K-P-Q-P-Q-Q-P-X region spans residues 372–491; it reads PTKTPAQQSG…LAKPSAQQPT (120 aa). Residues 392 to 408 are compositionally biased toward pro residues; it reads PTKPSPQQPIPAKPQPQ. The span at 409-423 shows a compositional bias: low complexity; it reads QPVATKTQPQQSAPA. Over residues 424–472 the composition is skewed to pro residues; it reads KPQPQQPAPAKPQPQQPTPAKPQPQPPTPAKPQPQPPTATKPQPQPPTA. The segment covering 486–499 has biased composition (polar residues); it reads SAQQPTKSISQTVT. The C4-type zinc-finger motif lies at 523 to 547; the sequence is CPLCNTTELLLHIPEKANFNTCTEC. Disordered stretches follow at residues 586 to 880, 896 to 1012, 1069 to 1357, 1373 to 1604, and 1622 to 1815; these read AAIP…TVTG, LIST…ACPL, QLGD…PSDL, STLV…EELV, and TIAD…SDPE. Low complexity predominate over residues 596-613; the sequence is PKAATAPTATASKSPVPS. Basic and acidic residues predominate over residues 618–654; the sequence is PKKEPPSKQDSPKALESKKPPEPKKPPEPKKPPEPKK. Residues 672–682 are compositionally biased toward low complexity; the sequence is APQLPVAEALP. Residues 683 to 693 show a composition bias toward pro residues; it reads EPAPPKEPSGP. Residues 705 to 717 are compositionally biased toward basic and acidic residues; sequence VEPKQPKMTETRA. Positions 718 to 767 are enriched in polar residues; that stretch reads DIQSSSTTKPDILSSQVQSQAQVKTASPLKTDSAKPSQSFPPTGEKTTPL. Over residues 790 to 808 the composition is skewed to basic and acidic residues; it reads ESKDPKHIDPIQKKDEPKK. 2 positions are modified to phosphoserine: Ser857 and Ser869. Composition is skewed to polar residues over residues 867–878, 896–906, and 917–936; these read PKSQPTTPQETV, LISTAGQQGPH, and QAPT…STGQ. At Thr873 the chain carries Phosphothreonine. Basic and acidic residues predominate over residues 990–1004; the sequence is EPEKAVPAHKPDKTT. The segment at 1010–1033 adopts a C4-type zinc-finger fold; that stretch reads CPLCRTELNLGSQEPPNFNTCTEC. The span at 1077–1092 shows a compositional bias: pro residues; sequence PPAPSGPKASPMPAPA. A compositionally biased stretch (basic and acidic residues) spans 1110 to 1129; sequence KEAEGKTEAEKPVPEKETAS. At Thr1133 the chain carries Phosphothreonine. Basic and acidic residues-rich tracts occupy residues 1141–1150, 1157–1199, and 1274–1295; these read QKLEESEGKK, PEKK…KLPP, and SSKD…DKSD. The segment covering 1300 to 1318 has biased composition (polar residues); it reads QQPKSPQGLSDTGYSSDGI. Phosphoserine occurs at positions 1304, 1314, 1315, 1344, 1346, 1349, 1350, and 1353. A compositionally biased stretch (basic and acidic residues) spans 1331-1345; the sequence is SDEKDLLKGLKKDSF. Residues 1346-1355 are compositionally biased toward low complexity; sequence SQESSPSSPS. Over residues 1378–1396 the composition is skewed to basic and acidic residues; it reads EKAEKKTQPQKISPEKPQD. Over residues 1397–1407 the composition is skewed to polar residues; that stretch reads QQKTQTASETL. Residues 1417 to 1456 show a composition bias toward basic and acidic residues; the sequence is KESQEKKVSPKKDSEQGFPSRKEHKEKPELVDDLSPRRAS. Ser1451, Ser1463, Ser1464, Ser1466, Ser1469, Ser1493, Ser1496, Ser1517, and Ser1519 each carry phosphoserine. Over residues 1511–1523 the composition is skewed to acidic residues; the sequence is SADEDASGSEDEE. Thr1564 carries the phosphothreonine modification. Phosphoserine is present on residues Ser1565, Ser1575, and Ser1587. The span at 1578 to 1587 shows a compositional bias: acidic residues; the sequence is DEDDETFDES. The segment covering 1588–1599 has biased composition (basic and acidic residues); that stretch reads PELKFRETKSQE. Over residues 1622–1635 the composition is skewed to polar residues; it reads TIADKYSSESSQKK. Residues 1640–1650 are compositionally biased toward acidic residues; that stretch reads FDEEPELEMES. The residue at position 1650 (Ser1650) is a Phosphoserine. Residue Thr1652 is modified to Phosphothreonine. Ser1654 and Ser1659 each carry phosphoserine. Residues 1662–1679 show a composition bias toward polar residues; it reads EGSSSLHASSFTPGTSPT. Over residues 1719–1732 the composition is skewed to acidic residues; sequence DSSEEEELREEEEL. 2 positions are modified to phosphoserine: Ser1720 and Ser1721. The segment covering 1733-1746 has biased composition (basic and acidic residues); that stretch reads LKEQEKQRELEQQQ. Thr1772 carries the phosphothreonine modification. Ser1778 carries the post-translational modification Phosphoserine. Basic and acidic residues predominate over residues 1787-1802; that stretch reads EELRQAAEMEELHRSS. 4 positions are modified to phosphoserine: Ser1807, Ser1812, Ser1820, and Ser1841. Disordered regions lie at residues 2116 to 2139, 2275 to 2385, and 2456 to 2486; these read PSES…SSVC, ELTK…PTYP, and KPPI…TGLS. The segment covering 2121 to 2139 has biased composition (low complexity); the sequence is TSVPPSDTPSLTSSISSVC. Residues 2350–2384 are compositionally biased toward pro residues; that stretch reads QPPPPPPPPPPSPSTSSPPPTPPLPPATSPKPPTY. Residue Ser2511 is modified to Phosphoserine. Thr2702 carries an O-linked (GlcNAc) threonine glycan. A glycan (O-linked (GlcNAc) serine) is linked at Ser2976. Thr3014 is modified (phosphothreonine). 2 disordered regions span residues 3350-3457 and 3503-3572; these read KEEK…PLSK and KTYK…LYSP. Residue Ser3374 is modified to Phosphoserine. The span at 3377 to 3386 shows a compositional bias: basic and acidic residues; it reads DDPRNLKKIV. Position 3388 is a phosphoserine (Ser3388). Phosphothreonine occurs at positions 3392 and 3419. Residues 3419–3428 show a composition bias toward acidic residues; that stretch reads TDDEDQDEWD. Residues 3511 to 3523 are compositionally biased toward polar residues; sequence GCQTETDSDTQSP. Residues Ser3522, Ser3530, Ser3561, Ser3565, Ser3571, Ser3574, Ser3577, Ser3598, Ser3624, Ser3626, and Ser3632 each carry the phosphoserine modification. 2 disordered regions span residues 3602–3695 and 3774–3816; these read VLHP…ASRR and AEDR…FIPP. Polar residues-rich tracts occupy residues 3647 to 3663 and 3679 to 3691; these read EGFT…SGTQ and STGT…TMGT. Phosphoserine is present on Ser3781. The span at 3791-3803 shows a compositional bias: basic and acidic residues; sequence SRVESQHGVERPR. Residues 3805 to 3816 are compositionally biased toward polar residues; the sequence is APQTEFSQFIPP. Residues Ser4034 and Ser4150 each carry the phosphoserine modification. Disordered stretches follow at residues 4225–4248 and 4272–4291; these read ADKP…YGLD and VSFG…LPIS. The segment covering 4228–4248 has biased composition (low complexity); that stretch reads PYSSGSRSRPSSRPSSVYGLD. Positions 4275-4291 are enriched in polar residues; sequence GHSSSSARTKPTSLPIS. Residues Ser4304, Ser4308, Ser4311, Ser4340, and Ser4376 each carry the phosphoserine modification. Positions 4335–4357 are disordered; sequence RDQFGSSHSLPEVQQHMREESRT. The 95-residue stretch at 4442–4536 folds into the PDZ domain; sequence RVKITRDFKD…EAEICVRLDL (95 aa). The tract at residues 4589–4638 is disordered; it reads VEKGSHAHSGPTSAGSSSVPSPGQPGSPSVSKKKHSSTKPTDGPKAASHP. The span at 4595-4618 shows a compositional bias: low complexity; it reads AHSGPTSAGSSSVPSPGQPGSPSV. At Ser4609 the chain carries Phosphoserine. Positions 4639–4768 constitute a C2 1 domain; that stretch reads ITGEIQLQIN…SHLDNTPRWY (130 aa). Asp4668 and Asp4674 together coordinate Ca(2+). Ser4723 is modified (phosphoserine). Positions 4738, 4740, 4743, and 4746 each coordinate Ca(2+). Disordered stretches follow at residues 4775 to 4851 and 4874 to 4908; these read ESID…SVAQ and QPTK…SEGS. Low complexity-rich tracts occupy residues 4783 to 4795 and 4822 to 4832; these read HSSQ…PKPS and SSPGSSKSSSE. The segment covering 4840–4851 has biased composition (polar residues); it reads PSRSQSKTSVAQ. Over residues 4886–4908 the composition is skewed to low complexity; the sequence is SSVSTGSSGSSVGSGYSVDSEGS. The 126-residue stretch at 4950–5075 folds into the C2 2 domain; it reads VMGEIKLALK…DLRKRIVNWH (126 aa).

As to quaternary structure, interacts with BSN, ERC2/CAST1, RIMS1 and UNC13A. Interacts (via C-terminus) with TRIO (via N-terminus). Interacts with CTBP1. Interacts with SIAH1; this interaction negatively regulates SIAH1 E3 ligase activity. Directly interacts with GIT1 and GIT2. The cofactor is Ca(2+). Expressed in brain (at protein level).

Its subcellular location is the presynaptic active zone. Its function is as follows. Scaffold protein of the presynaptic cytomatrix at the active zone (CAZ) which is the place in the synapse where neurotransmitter is released. After synthesis, participates in the formation of Golgi-derived membranous organelles termed Piccolo-Bassoon transport vesicles (PTVs) that are transported along axons to sites of nascent synaptic contacts. At the presynaptic active zone, regulates the spatial organization of synaptic vesicle cluster, the protein complexes that execute membrane fusion and compensatory endocytosis. Organizes as well the readily releasable pool of synaptic vesicles and safeguards a fraction of them to be not immediately available for action potential-induced release. Also functions in processes other than assembly such as the regulation of specific presynaptic protein ubiquitination by interacting with SIAH1 or the regulation of presynaptic autophagy. Also mediates synapse to nucleus communication leading to reconfiguration of gene expression by associating with the transcriptional corepressor CTBP1 and by subsequently reducing the size of its pool available for nuclear import. In Rattus norvegicus (Rat), this protein is Protein piccolo (Pclo).